The primary structure comprises 685 residues: Polyphosphate kinase (685 aa).

Residue asparagine 45 participates in ATP binding. 2 residues coordinate Mg(2+): arginine 375 and arginine 405. Histidine 435 serves as the catalytic Phosphohistidine intermediate. Tyrosine 468, arginine 564, and histidine 592 together coordinate ATP.

The protein belongs to the polyphosphate kinase 1 (PPK1) family. Mg(2+) is required as a cofactor. In terms of processing, an intermediate of this reaction is the autophosphorylated ppk in which a phosphate is covalently linked to a histidine residue through a N-P bond.

The enzyme catalyses [phosphate](n) + ATP = [phosphate](n+1) + ADP. In terms of biological role, catalyzes the reversible transfer of the terminal phosphate of ATP to form a long-chain polyphosphate (polyP). The protein is Polyphosphate kinase of Neisseria meningitidis serogroup B (strain ATCC BAA-335 / MC58).